The chain runs to 296 residues: Glycine--tRNA ligase alpha subunit (296 aa).

The protein belongs to the class-II aminoacyl-tRNA synthetase family. As to quaternary structure, tetramer of two alpha and two beta subunits.

The protein localises to the cytoplasm. It catalyses the reaction tRNA(Gly) + glycine + ATP = glycyl-tRNA(Gly) + AMP + diphosphate. This Synechococcus sp. (strain CC9605) protein is Glycine--tRNA ligase alpha subunit.